We begin with the raw amino-acid sequence, 546 residues long: Chaperonin GroEL 1 (546 aa).

Residues 30-33, lysine 51, 87-91, glycine 415, 479-481, and aspartate 495 contribute to the ATP site; these read TLGP, DGTTT, and NAA. The interval 526–546 is disordered; it reads KEDAPMPGGMPGGMGGMGMDM. The span at 534–546 shows a compositional bias: gly residues; the sequence is GMPGGMGGMGMDM.

This sequence belongs to the chaperonin (HSP60) family. As to quaternary structure, forms a cylinder of 14 subunits composed of two heptameric rings stacked back-to-back. Interacts with the co-chaperonin GroES.

It is found in the cytoplasm. It carries out the reaction ATP + H2O + a folded polypeptide = ADP + phosphate + an unfolded polypeptide.. Its function is as follows. Together with its co-chaperonin GroES, plays an essential role in assisting protein folding. The GroEL-GroES system forms a nano-cage that allows encapsulation of the non-native substrate proteins and provides a physical environment optimized to promote and accelerate protein folding. The chain is Chaperonin GroEL 1 from Burkholderia ambifaria (strain ATCC BAA-244 / DSM 16087 / CCUG 44356 / LMG 19182 / AMMD) (Burkholderia cepacia (strain AMMD)).